The sequence spans 372 residues: Envelope phospholipase OPG057 (372 aa).

The YPPL motif lies at 153–156 (YPPL). S-palmitoyl cysteine; by host attachment occurs at residues Cys185 and Cys186. A PLD phosphodiesterase domain is found at 307 to 334 (FTIQNNTKLLIVDDEYVHITSANFDGTH).

It belongs to the orthopoxvirus OPG057 family. In terms of assembly, interacts with protein OPG190. Palmitoylated. Attachment of the palmitate moiety is essential for correct intracellular targeting and protein function.

It localises to the virion membrane. It is found in the host Golgi apparatus. The protein resides in the host trans-Golgi network. Its subcellular location is the host endoplasmic reticulum membrane. It carries out the reaction a 1,2-diacyl-sn-glycero-3-phosphocholine + H2O = a 1,2-diacyl-sn-glycero-3-phosphate + choline + H(+). Functionally, major envelope protein that plays a role in the biogenesis of the viral double membrane and in egress of virus from the host cell. Produces the wrapped form of virus that is required for cell-to-cell spread. Acts as a lipase with broad specificity including phospholipase C, phospholipase A, and triacylglycerol lipase activities. In Homo sapiens (Human), this protein is Envelope phospholipase OPG057 (OPG057).